Reading from the N-terminus, the 401-residue chain is Phosphoglycerate kinase 3, cytosolic (401 aa).

11 residues coordinate (2R)-3-phosphoglycerate: valine 24, aspartate 25, asparagine 27, arginine 41, serine 63, histidine 64, glycine 66, arginine 67, arginine 122, histidine 154, and arginine 155. ADP is bound at residue glycine 200. Residue glycine 200 coordinates CDP. AMP is bound by residues lysine 202 and lysine 206. Position 206 (lysine 206) interacts with ATP. Residue glycine 224 coordinates ADP. Glycine 224 serves as a coordination point for CDP. AMP-binding residues include glycine 225 and glycine 297. ATP contacts are provided by glycine 225, glycine 297, and asparagine 321. Residues glycine 322 and phenylalanine 327 each coordinate CDP. ADP is bound at residue phenylalanine 327. Glutamate 328 contributes to the AMP binding site. The ATP site is built by glutamate 328, aspartate 359, and serine 360. Mg(2+) is bound at residue aspartate 359.

This sequence belongs to the phosphoglycerate kinase family. Monomer. Requires Mg(2+) as cofactor. In terms of tissue distribution, expressed in roots, leaves and inflorescence.

It localises to the cytoplasm. It carries out the reaction (2R)-3-phosphoglycerate + ATP = (2R)-3-phospho-glyceroyl phosphate + ADP. It participates in carbohydrate degradation; glycolysis; pyruvate from D-glyceraldehyde 3-phosphate: step 2/5. This is Phosphoglycerate kinase 3, cytosolic from Arabidopsis thaliana (Mouse-ear cress).